The chain runs to 1365 residues: Nuclear pore complex protein Nup154 (1365 aa).

The tract at residues 1–508 (MTLPQAQLDF…GTHIIEVLKM (508 aa)) is required for binding to Nup93-1 and anchoring to the nuclear pore complex. Positions 508-986 (MVDVLRQILL…KSINPLKGTA (479 aa)) are required for binding to chromatin.

It belongs to the non-repetitive/WGA-negative nucleoporin family. In terms of assembly, interacts (via N-terminus) with Nup93-1. Interacts with Nup35. Interacts with cup.

The protein localises to the nucleus. The protein resides in the nuclear pore complex. Its subcellular location is the chromosome. It is found in the nucleus membrane. It localises to the cytoplasm. Its function is as follows. Component of the nuclear pore complex. Has a role in the organization of the inner nuclear membrane proteins at the nuclear envelope. In germ cells, plays a role in the nuclear localization of components of the dpp signaling pathways, such as Medea and phosphorylated Mad. Binds to chromatin, and together with Nup62 and Nup93-1, contributes to karyosome morphology and chromatin organization including attachment to the nuclear envelope in oocytes and nurse cells. Has a role in female fertility including egg chamber development; in nurse cells, has a role in the organization of F-actin in subcortical and cytoplasmic actin filaments important for the transfer of cytoplasm from nurse cells to the growing oocytes. Has a role in male spermatogenesis and fertility. Has a role in germ line cell proliferation. This is Nuclear pore complex protein Nup154 from Drosophila melanogaster (Fruit fly).